The chain runs to 152 residues: Ribonuclease H (152 aa).

The region spanning 1–142 is the RNase H type-1 domain; that stretch reads MDSKVVIYTD…ADKLAVQGRE (142 aa). Mg(2+) contacts are provided by aspartate 10, glutamate 48, aspartate 70, and aspartate 134.

The protein belongs to the RNase H family. Monomer. Requires Mg(2+) as cofactor.

The protein localises to the cytoplasm. It catalyses the reaction Endonucleolytic cleavage to 5'-phosphomonoester.. Endonuclease that specifically degrades the RNA of RNA-DNA hybrids. This Rickettsia typhi (strain ATCC VR-144 / Wilmington) protein is Ribonuclease H.